A 156-amino-acid chain; its full sequence is Small ribosomal subunit protein bS6 (156 aa).

The segment at 98 to 156 (GHDFRDQRSHHGQAGEFRKREPQQKSKEQSEFSKEKKSFSKSVTKKTVVSKPKETKEEK) is disordered. Basic and acidic residues predominate over residues 113–135 (EFRKREPQQKSKEQSEFSKEKKS). A compositionally biased stretch (low complexity) spans 137-147 (SKSVTKKTVVS).

The protein belongs to the bacterial ribosomal protein bS6 family.

Functionally, binds together with bS18 to 16S ribosomal RNA. This chain is Small ribosomal subunit protein bS6, found in Mycoplasmopsis synoviae (strain 53) (Mycoplasma synoviae).